We begin with the raw amino-acid sequence, 106 residues long: ATP-dependent Clp protease adapter protein ClpS (106 aa).

Belongs to the ClpS family. In terms of assembly, binds to the N-terminal domain of the chaperone ClpA.

Functionally, involved in the modulation of the specificity of the ClpAP-mediated ATP-dependent protein degradation. The sequence is that of ATP-dependent Clp protease adapter protein ClpS from Vibrio atlanticus (strain LGP32) (Vibrio splendidus (strain Mel32)).